The chain runs to 342 residues: Holliday junction branch migration complex subunit RuvB (342 aa).

The tract at residues 1-185 (MTVKPLRDVT…FPIQERLEYY (185 aa)) is large ATPase domain (RuvB-L). ATP is bound by residues Leu24, Arg25, Gly66, Lys69, Thr70, Ser71, 132-134 (EDY), Arg175, Tyr185, and Arg222. Thr70 is a Mg(2+) binding site. Residues 186–256 (GPAELKEIAV…VVDRTLRRLE (71 aa)) form a small ATPAse domain (RuvB-S) region. The segment at 259-342 (ARGLDAMDRR…RPGGKQGSLV (84 aa)) is head domain (RuvB-H). Arg314 and Arg319 together coordinate DNA.

The protein belongs to the RuvB family. Homohexamer. Forms an RuvA(8)-RuvB(12)-Holliday junction (HJ) complex. HJ DNA is sandwiched between 2 RuvA tetramers; dsDNA enters through RuvA and exits via RuvB. An RuvB hexamer assembles on each DNA strand where it exits the tetramer. Each RuvB hexamer is contacted by two RuvA subunits (via domain III) on 2 adjacent RuvB subunits; this complex drives branch migration. In the full resolvosome a probable DNA-RuvA(4)-RuvB(12)-RuvC(2) complex forms which resolves the HJ.

The protein localises to the cytoplasm. It catalyses the reaction ATP + H2O = ADP + phosphate + H(+). Its function is as follows. The RuvA-RuvB-RuvC complex processes Holliday junction (HJ) DNA during genetic recombination and DNA repair, while the RuvA-RuvB complex plays an important role in the rescue of blocked DNA replication forks via replication fork reversal (RFR). RuvA specifically binds to HJ cruciform DNA, conferring on it an open structure. The RuvB hexamer acts as an ATP-dependent pump, pulling dsDNA into and through the RuvAB complex. RuvB forms 2 homohexamers on either side of HJ DNA bound by 1 or 2 RuvA tetramers; 4 subunits per hexamer contact DNA at a time. Coordinated motions by a converter formed by DNA-disengaged RuvB subunits stimulates ATP hydrolysis and nucleotide exchange. Immobilization of the converter enables RuvB to convert the ATP-contained energy into a lever motion, pulling 2 nucleotides of DNA out of the RuvA tetramer per ATP hydrolyzed, thus driving DNA branch migration. The RuvB motors rotate together with the DNA substrate, which together with the progressing nucleotide cycle form the mechanistic basis for DNA recombination by continuous HJ branch migration. Branch migration allows RuvC to scan DNA until it finds its consensus sequence, where it cleaves and resolves cruciform DNA. The protein is Holliday junction branch migration complex subunit RuvB of Anaeromyxobacter sp. (strain K).